The chain runs to 243 residues: MLLHLIYGPTCSGKTDMAIQIAQETGWPVVALDRVQCCPQIATGSGRPLESELQSTRRIYLDSRPLTEGILDAESAHRRLIFEVDWRKSEEGLILEGGSISLLNCMAKSPFWRSGFQWHVKRLRLGDSDAFLTRAKQRVAEMFAIREDRPSLLEELAELWNYPAARPILEDIDGYRCAIRFARKHDLAISQLPNIDAGRHVELIEAIANEYLEHALSQERDFPQWPEDGAGQPVCPVTLTRIR.

The catalysed reaction is dimethylallyl diphosphate + AMP = N(6)-(dimethylallyl)adenosine 5'-phosphate + diphosphate. Its function is as follows. Transfers dimethylallyl groups to AMP as part of the biosynthesis of cytokinin phytohormones. The polypeptide is Adenylate dimethylallyltransferase (tzs) (Agrobacterium fabrum (strain C58 / ATCC 33970) (Agrobacterium tumefaciens (strain C58))).